Here is a 405-residue protein sequence, read N- to C-terminus: Acetylornithine aminotransferase 1 (405 aa).

Pyridoxal 5'-phosphate is bound by residues Gly108–Ala109 and Phe141. Arg144 provides a ligand contact to N(2)-acetyl-L-ornithine. Asp226–Gln229 contacts pyridoxal 5'-phosphate. Lys255 is modified (N6-(pyridoxal phosphate)lysine). Residue Thr283 coordinates N(2)-acetyl-L-ornithine. Residue Thr284 coordinates pyridoxal 5'-phosphate.

This sequence belongs to the class-III pyridoxal-phosphate-dependent aminotransferase family. ArgD subfamily. In terms of assembly, homodimer. The cofactor is pyridoxal 5'-phosphate.

It localises to the cytoplasm. The catalysed reaction is N(2)-acetyl-L-ornithine + 2-oxoglutarate = N-acetyl-L-glutamate 5-semialdehyde + L-glutamate. Its pathway is amino-acid biosynthesis; L-arginine biosynthesis; N(2)-acetyl-L-ornithine from L-glutamate: step 4/4. In Pseudomonas syringae pv. tomato (strain ATCC BAA-871 / DC3000), this protein is Acetylornithine aminotransferase 1.